We begin with the raw amino-acid sequence, 280 residues long: Diaminopimelate epimerase (280 aa).

Substrate contacts are provided by Asn12, Gln45, and Asn65. Catalysis depends on Cys74, which acts as the Proton donor. Substrate is bound by residues 75–76, Asn163, Asn196, and 214–215; these read GN and ER. The Proton acceptor role is filled by Cys223. A substrate-binding site is contributed by 224–225; that stretch reads GT.

The protein belongs to the diaminopimelate epimerase family. Homodimer.

The protein localises to the cytoplasm. The catalysed reaction is (2S,6S)-2,6-diaminopimelate = meso-2,6-diaminopimelate. It participates in amino-acid biosynthesis; L-lysine biosynthesis via DAP pathway; DL-2,6-diaminopimelate from LL-2,6-diaminopimelate: step 1/1. Its function is as follows. Catalyzes the stereoinversion of LL-2,6-diaminopimelate (L,L-DAP) to meso-diaminopimelate (meso-DAP), a precursor of L-lysine and an essential component of the bacterial peptidoglycan. This Shewanella sediminis (strain HAW-EB3) protein is Diaminopimelate epimerase.